Here is a 787-residue protein sequence, read N- to C-terminus: Mitochondrial 15S rRNA processing factor CCM1 (787 aa).

The transit peptide at Met-1 to Met-12 directs the protein to the mitochondrion. Basic residues predominate over residues Gln-38–Lys-48. Residues Gln-38–Asn-58 form a disordered region. PPR repeat units lie at residues Ser-286–Pro-320, Ser-321–Thr-356, and Asp-359–Ile-393.

The protein belongs to the CCM1 family. In terms of assembly, binds to mitochondrial small subunit 15S rRNA.

It localises to the mitochondrion. Functionally, regulates mitochondrial small subunit maturation by controlling 15S rRNA 5'-end processing. Localizes to the 5' precursor of the 15S rRNA in a position that is subsequently occupied by mS47 in the mature yeast mtSSU. Uses structure and sequence-specific RNA recognition, binding to a single-stranded region of the precursor and specifically recognizing bases -6 to -1. The exchange of Ccm1 for mS47 is coupled to the irreversible removal of precursor rRNA that is accompanied by conformational changes of the mitoribosomal proteins uS5m and mS26. These conformational changes signal completion of 5'-end rRNA processing through protection of the mature 5'-end of the 15S rRNA and stabilization of mS47. The removal of the 5' precursor together with the dissociation of Ccm1 may be catalyzed by the 5'-3' exoribonuclease Pet127. Involved in the specific removal of group I introns in mitochondrial encoded transcripts. In Debaryomyces hansenii (strain ATCC 36239 / CBS 767 / BCRC 21394 / JCM 1990 / NBRC 0083 / IGC 2968) (Yeast), this protein is Mitochondrial 15S rRNA processing factor CCM1 (CCM1).